Here is a 426-residue protein sequence, read N- to C-terminus: Histidine--tRNA ligase (426 aa).

It belongs to the class-II aminoacyl-tRNA synthetase family. Homodimer.

It is found in the cytoplasm. It catalyses the reaction tRNA(His) + L-histidine + ATP = L-histidyl-tRNA(His) + AMP + diphosphate + H(+). The polypeptide is Histidine--tRNA ligase (Legionella pneumophila (strain Lens)).